The following is a 200-amino-acid chain: Inner membrane-spanning protein YciB (200 aa).

A run of 6 helical transmembrane segments spans residues 7 to 27, 32 to 52, 56 to 76, 93 to 113, 126 to 146, and 153 to 173; these read HPLF…FVNA, FAAT…SYVV, IPLM…LTLV, LFAA…AIMF, ILTF…EIIW, and FWVG…AIAQ.

This sequence belongs to the YciB family.

The protein localises to the cell inner membrane. Plays a role in cell envelope biogenesis, maintenance of cell envelope integrity and membrane homeostasis. The chain is Inner membrane-spanning protein YciB from Bradyrhizobium sp. (strain ORS 278).